The sequence spans 567 residues: Phenylalanine--tRNA ligase beta subunit (567 aa).

One can recognise a B5 domain in the interval 287-362; it reads YFQEEVEFNV…IGEGLASFHP (76 aa). The Mg(2+) site is built by Asp340, Asp346, Glu349, and Asp350.

The protein belongs to the phenylalanyl-tRNA synthetase beta subunit family. Type 2 subfamily. As to quaternary structure, tetramer of two alpha and two beta subunits. It depends on Mg(2+) as a cofactor.

The protein resides in the cytoplasm. It carries out the reaction tRNA(Phe) + L-phenylalanine + ATP = L-phenylalanyl-tRNA(Phe) + AMP + diphosphate + H(+). The polypeptide is Phenylalanine--tRNA ligase beta subunit (Borreliella afzelii (strain PKo) (Borrelia afzelii)).